We begin with the raw amino-acid sequence, 718 residues long: 1-deoxy-D-xylulose-5-phosphate synthase 1, chloroplastic (718 aa).

Residues 1–55 (MAFCALSFPAHISRATTPAPSDLQKSSSFSSRFYWGADLLRPSQYKVRKIQSGVY) constitute a chloroplast transit peptide. Thiamine diphosphate-binding positions include His143 and 184-186 (GHS). A Mg(2+)-binding site is contributed by Asp215. Thiamine diphosphate contacts are provided by residues 216 to 217 (GA), Asn244, Tyr365, and Glu447. Mg(2+) is bound at residue Asn244.

It belongs to the transketolase family. DXPS subfamily. Homodimer. The cofactor is Mg(2+). Thiamine diphosphate serves as cofactor. As to expression, expressed in trichomes, leaves, flowers, roots and stems.

The protein resides in the plastid. The protein localises to the chloroplast. It carries out the reaction D-glyceraldehyde 3-phosphate + pyruvate + H(+) = 1-deoxy-D-xylulose 5-phosphate + CO2. It functions in the pathway metabolic intermediate biosynthesis; 1-deoxy-D-xylulose 5-phosphate biosynthesis; 1-deoxy-D-xylulose 5-phosphate from D-glyceraldehyde 3-phosphate and pyruvate: step 1/1. In terms of biological role, catalyzes the acyloin condensation reaction between C atoms 2 and 3 of pyruvate and glyceraldehyde 3-phosphate to yield 1-deoxy-D-xylulose-5-phosphate (DXP). The polypeptide is 1-deoxy-D-xylulose-5-phosphate synthase 1, chloroplastic (Cannabis sativa (Hemp)).